The chain runs to 919 residues: MWNKTRTTLLAVGVLFHLFYLWSIFDIYFISPLVHGMSPYQSTPTPPAKRLFLIVGDGLRADTTFDKVTHPVSGKTEFLAPFIRSLVMNNATYGISHTRMPTESRPGHVAMIAGFYEDVSAVTKGWKSNPVNFDSFFNQSTHTYSFGSPDILPMFKDGASDPNKVDTWMYDHTFEDFTQSSIELDAFVFRHLDQLFHNSTLNSTLDYEIRQDGNVFFLHLLGCDTAGHSYRPYSAEYYDNVKYIDDQIPILIDKVNKFFADDKTAFIFTADHGMSAFGSHGDGHPNNTRTPLVAWGAGLNKPVHNPFPVSDNYTENWELSSIKRNDVKQADIASLMSYLIGVNYPKNSVGELPIAYIDGKESDKLAALYNNARSILEQYLVKQDEVIDSQFFYKEYFKFVEKSHSHYLEEIETLIQRISEGENYLEQEAITLTEELMQITLEGLHYLTTYNWRFIRTIVTFGFVGWIFFSFIIFLKSFILENVIDDQKASPLSHAVFGSIGILLNWILFYQHSPFNFYMYLLFPLYFWSYIFTNRSVLRSGIKEFFKGTSPWKRVLITISIISVYEGIVYGFFHRWTFTLITNILAFYPFICGVRELSVNILWIITSVLLSTFTLFDAVKIEDLNQIHLAGLLIILSAFYALYKIHSRINSYTRAIFAIQISLVAAMLAVTHRSVISLQLRQGLPRESQVAGWIIFFVSLFVMPILHYRKPNNDYKVRLLIIYLTFAPSFIILTISFESLFYFLFTSYMVQWIEIENKIKEMKTQKDENWLQVLRVSVIGFFLLQVAFFGTGNVASISSFSLESVCRLLPIFDPFLMGALLMLKLIIPYGLLSTCLGILNLKLNFKDYTISSLIISMSDILSLNFFYLLRTEGSWLDIGITISNYCLAILSSLFMLILEVLGHVLLKNVIIQDKTKKTQ.

Over 1–9 (MWNKTRTTL) the chain is Cytoplasmic. Residues 10-30 (LAVGVLFHLFYLWSIFDIYFI) traverse the membrane as a helical segment. At 31–457 (SPLVHGMSPY…TTYNWRFIRT (427 aa)) the chain is on the lumenal side. Residues Asn-90, Asn-138, Asn-198, Asn-202, Asn-286, and Asn-312 are each glycosylated (N-linked (GlcNAc...) asparagine). Residues 458–478 (IVTFGFVGWIFFSFIIFLKSF) form a helical membrane-spanning segment. Residues 479–488 (ILENVIDDQK) lie on the Cytoplasmic side of the membrane. Residues 489 to 509 (ASPLSHAVFGSIGILLNWILF) form a helical membrane-spanning segment. Topologically, residues 510 to 512 (YQH) are lumenal. A helical transmembrane segment spans residues 513-533 (SPFNFYMYLLFPLYFWSYIFT). Residues 534–553 (NRSVLRSGIKEFFKGTSPWK) lie on the Cytoplasmic side of the membrane. The helical transmembrane segment at 554–574 (RVLITISIISVYEGIVYGFFH) threads the bilayer. Residues 575–576 (RW) lie on the Lumenal side of the membrane. A helical membrane pass occupies residues 577 to 597 (TFTLITNILAFYPFICGVREL). Residue Ser-598 is a topological domain, cytoplasmic. The helical transmembrane segment at 599-619 (VNILWIITSVLLSTFTLFDAV) threads the bilayer. Residues 620–626 (KIEDLNQ) are Lumenal-facing. A helical membrane pass occupies residues 627–647 (IHLAGLLIILSAFYALYKIHS). The Cytoplasmic portion of the chain corresponds to 648-655 (RINSYTRA). The chain crosses the membrane as a helical span at residues 656–676 (IFAIQISLVAAMLAVTHRSVI). At 677 to 687 (SLQLRQGLPRE) the chain is on the lumenal side. Residues 688–708 (SQVAGWIIFFVSLFVMPILHY) traverse the membrane as a helical segment. Residues 709–720 (RKPNNDYKVRLL) are Cytoplasmic-facing. The helical transmembrane segment at 721-741 (IIYLTFAPSFIILTISFESLF) threads the bilayer. The Lumenal segment spans residues 742-776 (YFLFTSYMVQWIEIENKIKEMKTQKDENWLQVLRV). A helical membrane pass occupies residues 777–797 (SVIGFFLLQVAFFGTGNVASI). Residues 798–807 (SSFSLESVCR) are Cytoplasmic-facing. The helical transmembrane segment at 808 to 828 (LLPIFDPFLMGALLMLKLIIP) threads the bilayer. Topologically, residues 829 to 848 (YGLLSTCLGILNLKLNFKDY) are lumenal. The chain crosses the membrane as a helical span at residues 849–869 (TISSLIISMSDILSLNFFYLL). Residues 870–885 (RTEGSWLDIGITISNY) are Cytoplasmic-facing. Residues 886–906 (CLAILSSLFMLILEVLGHVLL) form a helical membrane-spanning segment. Topologically, residues 907–919 (KNVIIQDKTKKTQ) are lumenal.

This sequence belongs to the PIGG/PIGN/PIGO family. PIGN subfamily. In terms of assembly, interacts with CSF1; CSF1 channels phosphatidylethanolamine to MCD4 in the endoplasmic reticulum at contact sites to support GPI anchor biosynthesis. Post-translationally, N-glycosylated.

It localises to the endoplasmic reticulum membrane. The protein resides in the golgi apparatus membrane. The protein localises to the vacuole membrane. The protein operates within glycolipid biosynthesis; glycosylphosphatidylinositol-anchor biosynthesis. In terms of biological role, ethanolamine phosphate transferase involved in glycosylphosphatidylinositol-anchor biosynthesis. Transfers ethanolamine phosphate to the first alpha-1,4-linked mannose of the glycosylphosphatidylinositol precursor of GPI-anchor. Ethanolamine phosphate on the alpha-1,4-linked mannose is essential for further mannosylation by GPI10 and is necessary for an efficient recognition of GPI lipids and GPI proteins by the GPI transamidase, for the efficient transport of GPI anchored proteins from endoplasmic reticulum to Golgi and for the physiological incorporation of ceramides into GPI anchors by lipid remodeling. Also involved in non-mitochondrial ATP movements across membrane and participates in Golgi and endoplasmic reticulum function, Also required for the incorporation of BGL2 into the cell wall. The chain is GPI ethanolamine phosphate transferase 1 (MCD4) from Saccharomyces cerevisiae (strain ATCC 204508 / S288c) (Baker's yeast).